We begin with the raw amino-acid sequence, 364 residues long: Histidinol-phosphate aminotransferase (364 aa).

K226 is subject to N6-(pyridoxal phosphate)lysine.

It belongs to the class-II pyridoxal-phosphate-dependent aminotransferase family. Histidinol-phosphate aminotransferase subfamily. In terms of assembly, homodimer. Pyridoxal 5'-phosphate serves as cofactor.

It carries out the reaction L-histidinol phosphate + 2-oxoglutarate = 3-(imidazol-4-yl)-2-oxopropyl phosphate + L-glutamate. Its pathway is amino-acid biosynthesis; L-histidine biosynthesis; L-histidine from 5-phospho-alpha-D-ribose 1-diphosphate: step 7/9. This chain is Histidinol-phosphate aminotransferase, found in Sulfurimonas denitrificans (strain ATCC 33889 / DSM 1251) (Thiomicrospira denitrificans (strain ATCC 33889 / DSM 1251)).